A 330-amino-acid chain; its full sequence is Probable xanthine dehydrogenase subunit A (330 aa).

Could be composed of four subunits: PucA, PucC, PucD and PucE.

It catalyses the reaction xanthine + NAD(+) + H2O = urate + NADH + H(+). The catalysed reaction is hypoxanthine + NAD(+) + H2O = xanthine + NADH + H(+). It participates in purine metabolism; hypoxanthine degradation; urate from hypoxanthine: step 1/2. It functions in the pathway purine metabolism; hypoxanthine degradation; urate from hypoxanthine: step 2/2. Functionally, oxidizes hypoxanthine and xanthine to uric acid. PucA subunit could exert a molybdenum cofactor recruiting function. The protein is Probable xanthine dehydrogenase subunit A (pucA) of Bacillus subtilis (strain 168).